Here is a 592-residue protein sequence, read N- to C-terminus: K(+) efflux antiporter 4 (592 aa).

A signal peptide spans Met-1–Tyr-35. Helical transmembrane passes span Leu-169–Cys-189, Pro-193–Val-213, Thr-221–Ala-241, Ala-248–Thr-268, Gly-279–Met-299, Val-313–Leu-333, Val-343–Leu-363, Leu-388–Leu-408, Asn-437–Trp-457, Ile-462–Val-482, Thr-491–Ser-511, and Leu-535–Leu-555.

Belongs to the monovalent cation:proton antiporter 2 (CPA2) transporter (TC 2.A.37) family. KEA (TC 2.A.37.1) subfamily. Expressed in roots, stems, leaves, flowers and silique.

It localises to the golgi apparatus membrane. Its subcellular location is the golgi apparatus. It is found in the trans-Golgi network membrane. The protein resides in the prevacuolar compartment membrane. The protein localises to the endomembrane system. It catalyses the reaction K(+)(in) + H(+)(out) = K(+)(out) + H(+)(in). Its function is as follows. Electroneutral K(+)/H(+) efflux antiporter involved in K(+) homeostasis and osmotic adjustment. Together with KEA5 and KEA6, promotes growth and development, and facilitates endosomal pH and ions homeostasis, as well as salt tolerance (e.g. K(+), NaCl and LiCl), probably by supporting cell wall biosynthesis during rapid etiolated seedling growth. The protein is K(+) efflux antiporter 4 of Arabidopsis thaliana (Mouse-ear cress).